Reading from the N-terminus, the 304-residue chain is MAQVKRIRRSISGILVLDKPRGMSSNQALQKVRWLLNAEKAGHTGSLDPLATGVLPLCFGEATKFSQYLLDADKGYETVMRMGITTTTGDAEGELLAERDVTVGRDDLEQALPRFRGDIEQVPPMYSALKKDGQPLYKLARAGEVVEREARSVTITRLDLLSFEPPCATLAVSCSKGTYVRTLVEDLGQVLGCGAHVAALRRTQAGPFALAQAITLETLERVHAEGGPEALDQFLMPEDSGLLHWPVLQLSEHSAYYWLHGQPVRAPEAPKFGWLRVQDQTGRFIGIGEVTDDGRIAPRRLIRS.

Asp48 (nucleophile) is an active-site residue.

It belongs to the pseudouridine synthase TruB family. Type 1 subfamily.

It carries out the reaction uridine(55) in tRNA = pseudouridine(55) in tRNA. Responsible for synthesis of pseudouridine from uracil-55 in the psi GC loop of transfer RNAs. The polypeptide is tRNA pseudouridine synthase B (Pseudomonas aeruginosa (strain UCBPP-PA14)).